A 164-amino-acid polypeptide reads, in one-letter code: Putative 4-hydroxy-4-methyl-2-oxoglutarate aldolase (164 aa).

Substrate contacts are provided by residues 75–78 (GDLI) and R97. Residue D98 coordinates a divalent metal cation.

Belongs to the class II aldolase/RraA-like family. Homotrimer. Requires a divalent metal cation as cofactor.

It carries out the reaction 4-hydroxy-4-methyl-2-oxoglutarate = 2 pyruvate. The catalysed reaction is oxaloacetate + H(+) = pyruvate + CO2. Catalyzes the aldol cleavage of 4-hydroxy-4-methyl-2-oxoglutarate (HMG) into 2 molecules of pyruvate. Also contains a secondary oxaloacetate (OAA) decarboxylase activity due to the common pyruvate enolate transition state formed following C-C bond cleavage in the retro-aldol and decarboxylation reactions. The protein is Putative 4-hydroxy-4-methyl-2-oxoglutarate aldolase of Shewanella oneidensis (strain ATCC 700550 / JCM 31522 / CIP 106686 / LMG 19005 / NCIMB 14063 / MR-1).